The chain runs to 356 residues: Cyanide hydratase (356 aa).

The CN hydrolase domain occupies 15-290 (FKVAAVQAEP…EVVLYANISL (276 aa)). Glu55 acts as the Proton acceptor in catalysis. Lys137 is an active-site residue. Catalysis depends on Cys172, which acts as the Nucleophile. Residues 331–356 (DEQAASKAQQAEIDNAGKGSIVPSKL) form a disordered region.

Belongs to the carbon-nitrogen hydrolase superfamily. Nitrilase family.

The catalysed reaction is formamide = hydrogen cyanide + H2O. Functionally, catalyzes the hydration of cyanide to formamide. Degradation of cyanide may be important for plant pathogenic fungi in infection of cyanogenic plants. The chain is Cyanide hydratase from Armillaria gallica (Bulbous honey fungus).